Reading from the N-terminus, the 56-residue chain is Large ribosomal subunit protein bL33C (56 aa).

It belongs to the bacterial ribosomal protein bL33 family.

The polypeptide is Large ribosomal subunit protein bL33C (Sorangium cellulosum (strain So ce56) (Polyangium cellulosum (strain So ce56))).